Reading from the N-terminus, the 206-residue chain is ATP-dependent dethiobiotin synthetase BioD (206 aa).

Residue 12 to 17 (GVGKTI) participates in ATP binding. Thr16 is a Mg(2+) binding site. Lys32 is a catalytic residue. His46 and Glu98 together coordinate Mg(2+). 98–101 (EGAG) contributes to the ATP binding site.

Belongs to the dethiobiotin synthetase family. In terms of assembly, homodimer. Requires Mg(2+) as cofactor.

It is found in the cytoplasm. The enzyme catalyses (7R,8S)-7,8-diammoniononanoate + CO2 + ATP = (4R,5S)-dethiobiotin + ADP + phosphate + 3 H(+). It functions in the pathway cofactor biosynthesis; biotin biosynthesis; biotin from 7,8-diaminononanoate: step 1/2. Functionally, catalyzes a mechanistically unusual reaction, the ATP-dependent insertion of CO2 between the N7 and N8 nitrogen atoms of 7,8-diaminopelargonic acid (DAPA, also called 7,8-diammoniononanoate) to form a ureido ring. This chain is ATP-dependent dethiobiotin synthetase BioD, found in Novosphingobium aromaticivorans (strain ATCC 700278 / DSM 12444 / CCUG 56034 / CIP 105152 / NBRC 16084 / F199).